The chain runs to 508 residues: Photosystem II CP47 reaction center protein (508 aa).

Transmembrane regions (helical) follow at residues serine 21 to serine 36, isoleucine 101 to tryptophan 115, glycine 140 to phenylalanine 156, isoleucine 203 to serine 218, valine 237 to valine 252, and serine 457 to arginine 472.

The protein belongs to the PsbB/PsbC family. PsbB subfamily. In terms of assembly, PSII is composed of 1 copy each of membrane proteins PsbA, PsbB, PsbC, PsbD, PsbE, PsbF, PsbH, PsbI, PsbJ, PsbK, PsbL, PsbM, PsbT, PsbX, PsbY, PsbZ, Psb30/Ycf12, at least 3 peripheral proteins of the oxygen-evolving complex and a large number of cofactors. It forms dimeric complexes. The cofactor is Binds multiple chlorophylls. PSII binds additional chlorophylls, carotenoids and specific lipids..

The protein localises to the plastid. The protein resides in the chloroplast thylakoid membrane. Functionally, one of the components of the core complex of photosystem II (PSII). It binds chlorophyll and helps catalyze the primary light-induced photochemical processes of PSII. PSII is a light-driven water:plastoquinone oxidoreductase, using light energy to abstract electrons from H(2)O, generating O(2) and a proton gradient subsequently used for ATP formation. In Platanus occidentalis (Sycamore), this protein is Photosystem II CP47 reaction center protein.